The primary structure comprises 348 residues: Putative methylesterase 14, chloroplastic (348 aa).

2 disordered regions span residues 1 to 29 (MGNK…MNRS) and 60 to 80 (GSMS…SDPF). A chloroplast-targeting transit peptide spans 1 to 76 (MGNKIISMMK…GSTSTRKRTL (76 aa)). Ser77 carries the phosphoserine modification. The Acyl-ester intermediate role is filled by Ser172. Catalysis depends on charge relay system residues Asp299 and His327.

Belongs to the AB hydrolase superfamily. Methylesterase family.

The protein localises to the plastid. It is found in the chloroplast. Its function is as follows. Putative methylesterase. The sequence is that of Putative methylesterase 14, chloroplastic from Arabidopsis thaliana (Mouse-ear cress).